Consider the following 616-residue polypeptide: ATP-dependent zinc metalloprotease FtsH 3 (616 aa).

Residues 1-9 (MSKNNKKWR) are Cytoplasmic-facing. Residues 10-30 (NAGLYALLLIVVLALASAFFD) traverse the membrane as a helical segment. Over 31–108 (RPTQTRETLS…VQPQSDEGFW (78 aa)) the chain is Lumenal. The helical transmembrane segment at 109–129 (FRIASTLFLPILLLVGIFFLF) threads the bilayer. The Cytoplasmic segment spans residues 130–616 (RRAQSGPGSQ…NNNAKLALLV (487 aa)). 201–208 (GPPGTGKT) contributes to the ATP binding site. Zn(2+) is bound at residue His-423. Residue Glu-424 is part of the active site. Residues His-427 and Asp-504 each coordinate Zn(2+).

This sequence in the central section; belongs to the AAA ATPase family. In the C-terminal section; belongs to the peptidase M41 family. In terms of assembly, homohexamer (Potential). Part of a large complex that includes FtsH2 and PSII. Coimmunoprecipitates with YidC. The cofactor is Zn(2+).

It localises to the cellular thylakoid membrane. Its function is as follows. Acts as a processive, ATP-dependent zinc metallopeptidase for both cytoplasmic and membrane proteins. Plays a role in the quality control of integral membrane proteins. The protein is ATP-dependent zinc metalloprotease FtsH 3 of Synechocystis sp. (strain ATCC 27184 / PCC 6803 / Kazusa).